The following is a 244-amino-acid chain: Uridylate kinase (244 aa).

17–20 (KVSG) contributes to the ATP binding site. Residues 25-30 (GEKGFG) form an involved in allosteric activation by GTP region. Glycine 59 lines the UMP pocket. Positions 60 and 64 each coordinate ATP. UMP is bound by residues aspartate 80 and 141-148 (VGNPFFTT). Threonine 168, glutamine 169, tyrosine 174, and aspartate 177 together coordinate ATP.

This sequence belongs to the UMP kinase family. As to quaternary structure, homohexamer.

The protein localises to the cytoplasm. It catalyses the reaction UMP + ATP = UDP + ADP. It participates in pyrimidine metabolism; CTP biosynthesis via de novo pathway; UDP from UMP (UMPK route): step 1/1. Allosterically activated by GTP. Inhibited by UTP. Its function is as follows. Catalyzes the reversible phosphorylation of UMP to UDP. In Ehrlichia canis (strain Jake), this protein is Uridylate kinase.